Consider the following 339-residue polypeptide: UPF0450 protein C17orf58 (339 aa).

An N-terminal signal peptide occupies residues 1-17; the sequence is MTARAFWLLCLIVGSSP. The segment at 17–191 is disordered; it reads PEAPVAERKT…PQRDAEPGAE (175 aa). Positions 21 to 36 are enriched in basic and acidic residues; it reads VAERKTSPPHSRKPDS. A compositionally biased stretch (low complexity) spans 56-72; it reads APQRPRAAEVAPAARAW. A compositionally biased stretch (basic and acidic residues) spans 112–125; the sequence is ASPRREPASEDAPR. A compositionally biased stretch (low complexity) spans 132–163; the sequence is LRFPAARPPALATEGSAGHAHPNRPRAAALAP. Intrachain disulfides connect Cys-193/Cys-267, Cys-197/Cys-271, and Cys-208/Cys-338. Residues 193-338 form the NTR domain; the sequence is CARACRSDLD…QIQGAIHTQC (146 aa).

This sequence belongs to the UPF0450 family.

The protein is UPF0450 protein C17orf58 (C17orf58) of Homo sapiens (Human).